Here is an 87-residue protein sequence, read N- to C-terminus: UPF0250 protein KPN78578_06520 (87 aa).

This sequence belongs to the UPF0250 family.

The polypeptide is UPF0250 protein KPN78578_06520 (Klebsiella pneumoniae subsp. pneumoniae (strain ATCC 700721 / MGH 78578)).